The following is a 1605-amino-acid chain: Zinc finger protein jing homolog (1605 aa).

Over residues 1-15 (MQHQSLSVRNSSGIS) the composition is skewed to polar residues. Disordered stretches follow at residues 1–28 (MQHQ…VRSS), 60–117 (QWPW…QQSN), 359–388 (TRKV…TSDP), 441–468 (QQHQ…TQAQ), 856–877 (STTS…PPKL), 917–947 (TKAT…ASCT), and 991–1213 (NDSG…TDFL). Over residues 64 to 117 (NTSNNTNATNSNNVQSNNNSSTATSNSSTNSNNSPAVNTPTTQNQSQPTTQQSN) the composition is skewed to low complexity. A compositionally biased stretch (polar residues) spans 991 to 1000 (NDSGIVANSS). The span at 1021–1030 (PQKKDEESRQ) shows a compositional bias: basic and acidic residues. The segment covering 1035-1049 (SPVPSPSPLSEPPVI) has biased composition (pro residues). Composition is skewed to acidic residues over residues 1053–1090 (SEPE…DEPH) and 1099–1110 (SSEAVELPELED). A compositionally biased stretch (pro residues) spans 1112-1126 (QPSPPLPCELPPPPT). Residues 1135-1149 (LSLPPSQKSPKSLLL) are compositionally biased toward low complexity. The span at 1165–1201 (QESMSSDQDYSNQSPLDESSPTGSAEPSESQRSTTPV) shows a compositional bias: polar residues. The C2H2-type 1 zinc-finger motif lies at 1260–1285 (GVCYWSNCDAQFDTSSKLLDHLQIQH). The C2H2-type 2; degenerate zinc-finger motif lies at 1293–1320 (FACLWDGCKVHNKESCSRRWLERHVLSH). The segment at 1326-1350 (HKCIVAGCGMRFGSQLALEKHVNHH) adopts a C2H2-type 3 zinc-finger fold. Disordered regions lie at residues 1352-1371 (NNTD…LPKV) and 1511-1605 (CSRS…SSTS). Low complexity-rich tracts occupy residues 1511-1537 (CSRS…SLIS) and 1556-1605 (KQSY…SSTS).

It belongs to the AEBP2/jing C2H2-type zinc-finger family.

It is found in the nucleus. May functionally interact with Polycomb group (PcG) and trithorax group (trxG) proteins to repress transcription. The polypeptide is Zinc finger protein jing homolog (Aedes aegypti (Yellowfever mosquito)).